We begin with the raw amino-acid sequence, 400 residues long: Acetate kinase (400 aa).

Position 10 (asparagine 10) interacts with Mg(2+). Lysine 17 lines the ATP pocket. Arginine 91 provides a ligand contact to substrate. The active-site Proton donor/acceptor is aspartate 150. ATP-binding positions include 210-214 (HLGNG), 285-287 (DCR), and 333-337 (GIGEN). Position 387 (glutamate 387) interacts with Mg(2+).

Belongs to the acetokinase family. Homodimer. Requires Mg(2+) as cofactor. Mn(2+) is required as a cofactor.

The protein resides in the cytoplasm. It carries out the reaction acetate + ATP = acetyl phosphate + ADP. The protein operates within metabolic intermediate biosynthesis; acetyl-CoA biosynthesis; acetyl-CoA from acetate: step 1/2. Its function is as follows. Catalyzes the formation of acetyl phosphate from acetate and ATP. Can also catalyze the reverse reaction. This is Acetate kinase from Erwinia tasmaniensis (strain DSM 17950 / CFBP 7177 / CIP 109463 / NCPPB 4357 / Et1/99).